The chain runs to 560 residues: MASSTALISDTEAWKDLKGHVEDIKKTHLRDLMTDANRCQSMMMEFDGLLLDYSRQRAPVETMDKLLNLAKAAQLTEKISRMFNGEHINSTENRSVLHVALRAPKDAVIKADGKNVVQEVWNVLDKIKEFSEKIRSGSWVGATGKPLKDVIAIGIGGSFLGPLFVHTALQTDPEALESAKGRQLRFLANIDPVDVARNIIGLNPETTLVVVVSKTFTTAETMLNARTLREWITAALGASAVAKHMVAVSTNLALVEKFGIDPNNAFAFWDWVGGRYSVCSAVGVLPLSLQYGFSVVEKFLKGASSIDQHFQSTPFEKNIPVLLGLLSVWNVSFLGYPARAILPYSQALEKFAPHIQQVSMESNGKGVSIDGLPLPFETGEIDFGEPGTNGQHSFYQLIHQGRVIPCDFIGIVKSQQPVYLKGEVVSNHDELMSNFFAQPDALAYGKTPEQLQKENVSENLIPHKTFSGNRPSLSLLLPELTAYNVGQLLAIYEHRVAVQGFVWGINSFDQWGVELGKVLATQVRKQLHSSRTQGTALEGFNYSTTTLLKRYLETSSEPQM.

An N-acetylalanine modification is found at A2. Residue E361 is the Proton donor of the active site. Catalysis depends on residues H392 and K517.

This sequence belongs to the GPI family. As to quaternary structure, homodimer.

The protein resides in the cytoplasm. The enzyme catalyses alpha-D-glucose 6-phosphate = beta-D-fructose 6-phosphate. It functions in the pathway carbohydrate degradation; glycolysis; D-glyceraldehyde 3-phosphate and glycerone phosphate from D-glucose: step 2/4. The protein is Glucose-6-phosphate isomerase, cytosolic (PGIC) of Arabidopsis lyrata subsp. petraea (Northern rock-cress).